The following is a 275-amino-acid chain: Chemotaxis protein methyltransferase 1 (275 aa).

Residues 1-275 (MTAITISDQE…CNPGIIYKLK (275 aa)) enclose the CheR-type methyltransferase domain. Residues Asn-76, Thr-78, Arg-82, Glu-117, Asp-145, 201 to 202 (NL), and 218 to 219 (RN) each bind S-adenosyl-L-methionine.

The enzyme catalyses L-glutamyl-[protein] + S-adenosyl-L-methionine = [protein]-L-glutamate 5-O-methyl ester + S-adenosyl-L-homocysteine. Its function is as follows. Methylation of the membrane-bound methyl-accepting chemotaxis proteins (MCP) to form gamma-glutamyl methyl ester residues in MCP. The sequence is that of Chemotaxis protein methyltransferase 1 (cheR1) from Vibrio cholerae serotype O1 (strain ATCC 39315 / El Tor Inaba N16961).